Consider the following 1097-residue polypeptide: MAIPGRGDVPRDPEEVLNDAKDFLGQYFASIRRANTPAHEARWKIVQEEVATTGTYQLTTTELVFGAKLAWRNASRCIGRIQWSKLQVFDCRQVTTTSGMFEALCNHIKYSTNKGNIRSAITLFPQRTDGKHDYRIWNSQLISYAGYRQPDGTVLGDPMHCEFTDLCLKLGWKPPRTAWDILPLVLSANGKDPDYFEIPRELVMEIHMTHPTFEWFKELELRWYALPAVSSMRFDCGGIEFTANAFNGWYMSTEIGCRNFCDTNRLNVLEKIAQNMGLDTRTPVNLWKDKALVEVNVAVLHSFQQHNATIVDHHTASESFIKHLDNENRLRSGCPADWIWIVPPMSSSITPVFHQEMALYYLKPSYEYQEPAWKTHQWQKSKPITGKRPINRKFHFKQIARAVKFTSKLFGRALSKRIKATVLYATETGKSEQYAKELGVIFGHAFNAQVHCMADYDITSIEHEALLLVVTSTFGNGDPPENGVAFGEHLCEILYADQVGEDSTGNQMLTPKSFIKANSDIQRYTAGNPKKLNRLESLKGSTTDATSIDSFGPLSNVRFAVFALGSSAYPNFCNFGKYVDKLLVDLGGERIHDLATGDEMCGQDQAFRKWASSVFNVACETFCLDDDETLQEAKRALGTVALSEETVQFARAGCRPATLHAALQKSLNKQFVSCTVKANKDLGDASAERSTIFIDLEPKEEIKYNPGDHVGIIACNRKELVESLLSRIKDVDDYDEPLQLQLLKETHTSSGLVKSWEPHEKLPIMSVRELFTRFLDITTPPTTILLQYLATTCEDEEEKKQLNVLATDPGAYEDWRHFHFPTLPEVLDQFPSARPNASLLAALLSPLQPRFYSISSSPLAHAKRLHLTVAVVTYRTQDGEGPVHYGVCSNYLMERKPGDEVYLFIRSAPNFHLPQDLSVPLILIGPGTGIAPFRGFWHHRRALQNSCSRTTTGPVWLFFGCRTKTMDLYREEKEQALKEGVLSKVFLALSREKEVPKTYVQEVAENVGAEIHDLLINKGAHFYVCGDCKMAEDVHQKLKGIVKKHGNMTDEQVQNFMFMLKEENRYHEDIFGITLRTAEVHSASRESARRNRVASQP.

C77 serves as a coordination point for heme b. Residues Q140, W249, Y250, E254, and N259 each contribute to the L-arginine site. (6R)-L-erythro-5,6,7,8-tetrahydrobiopterin-binding residues include W340 and F353. Residue Y368 participates in heme b binding. Residues 387–410 (KRPINRKFHFKQIARAVKFTSKLF) are calmodulin-binding. Residues 420–615 (ATVLYATETG…AFRKWASSVF (196 aa)) form the Flavodoxin-like domain. FMN contacts are provided by residues 426–430 (TETGK) and 561–592 (VFALGSSAYPNFCNFGKYVDKLLVDLGGERIH). Positions 669 to 914 (KQFVSCTVKA…IRSAPNFHLP (246 aa)) constitute an FAD-binding FR-type domain. FAD contacts are provided by residues 704 to 715 (YNPGDHVGIIAC) and 847 to 857 (LQPRFYSISSS). NADP(+) contacts are provided by residues 922-940 (ILIGPGTGIAPFRGFWHHR) and 1019-1034 (GAHFYVCGDCKMAEDV).

The protein belongs to the NOS family. Requires heme b as cofactor. It depends on FAD as a cofactor. FMN serves as cofactor.

It carries out the reaction 2 L-arginine + 3 NADPH + 4 O2 + H(+) = 2 L-citrulline + 2 nitric oxide + 3 NADP(+) + 4 H2O. Produces nitric oxide (NO) which is a messenger molecule with diverse functions throughout the body. This Bombyx mori (Silk moth) protein is Nitric oxide synthase-like protein.